The following is a 65-amino-acid chain: Transcriptional regulatory protein SenS (65 aa).

Residues 11–31 constitute a DNA-binding region (H-T-H motif); the sequence is RFRKRKTYGNQILPLELLIEK.

To B.natto SenN.

Regulates the expression of extracellular-protein genes of Bacillus subtilis. The chain is Transcriptional regulatory protein SenS (senS) from Bacillus subtilis (strain 168).